Consider the following 407-residue polypeptide: Transcriptional regulator ICP22 homolog (407 aa).

The tract at residues 34-268 (RKRRRKLKPQ…STQPGGVPKL (235 aa)) is disordered. Positions 81–241 (EREGEGGEEG…EEAEEEEEEA (161 aa)) are enriched in acidic residues.

Belongs to the herpesviridae ICP22 family.

The protein is Transcriptional regulator ICP22 homolog (73) of Saimiriine herpesvirus 2 (strain 11) (SaHV-2).